A 127-amino-acid chain; its full sequence is Small ribosomal subunit protein uS13 (127 aa).

The disordered stretch occupies residues 99 to 127 (RGQRTRTNARTRRGRRGQAIGIKKKTLKK).

The protein belongs to the universal ribosomal protein uS13 family. In terms of assembly, part of the 30S ribosomal subunit. Forms a loose heterodimer with protein S19. Forms two bridges to the 50S subunit in the 70S ribosome.

Its function is as follows. Located at the top of the head of the 30S subunit, it contacts several helices of the 16S rRNA. In the 70S ribosome it contacts the 23S rRNA (bridge B1a) and protein L5 of the 50S subunit (bridge B1b), connecting the 2 subunits; these bridges are implicated in subunit movement. Contacts the tRNAs in the A and P-sites. This chain is Small ribosomal subunit protein uS13, found in Roseiflexus castenholzii (strain DSM 13941 / HLO8).